Here is a 253-residue protein sequence, read N- to C-terminus: UPF0174 protein jhp_1494 (253 aa).

This sequence belongs to the UPF0174 family.

This chain is UPF0174 protein jhp_1494, found in Helicobacter pylori (strain J99 / ATCC 700824) (Campylobacter pylori J99).